The following is a 238-amino-acid chain: UPF0280 protein Mboo_1274 (238 aa).

The protein belongs to the UPF0280 family.

This chain is UPF0280 protein Mboo_1274, found in Methanoregula boonei (strain DSM 21154 / JCM 14090 / 6A8).